Consider the following 688-residue polypeptide: Elongation factor G (688 aa).

A tr-type G domain is found at K6–I280. Residues A15–T22, D79–H83, and N133–D136 each bind GTP.

It belongs to the TRAFAC class translation factor GTPase superfamily. Classic translation factor GTPase family. EF-G/EF-2 subfamily.

Its subcellular location is the cytoplasm. Functionally, catalyzes the GTP-dependent ribosomal translocation step during translation elongation. During this step, the ribosome changes from the pre-translocational (PRE) to the post-translocational (POST) state as the newly formed A-site-bound peptidyl-tRNA and P-site-bound deacylated tRNA move to the P and E sites, respectively. Catalyzes the coordinated movement of the two tRNA molecules, the mRNA and conformational changes in the ribosome. The protein is Elongation factor G of Ureaplasma urealyticum serovar 10 (strain ATCC 33699 / Western).